Consider the following 1122-residue polypeptide: TSET complex member tstF (1122 aa).

Over residues 88–126 (SSSASGINGTNNNNSGSNSSNNNNNNNGSLSNSPNNNNN) the composition is skewed to low complexity. Disordered regions lie at residues 88–131 (SSSA…AFIG) and 178–215 (QTLH…STNS). Positions 178–190 (QTLHNRSPNNTIK) are enriched in polar residues. Residues 191–215 (LSPNSSNNDSLNNNNNNINNNSTNS) show a composition bias toward low complexity. 3 WD repeats span residues 298 to 337 (FENK…IEKQ), 342 to 381 (PKGT…LATQ), and 383 to 422 (SKVH…EVSK). A disordered region spans residues 731 to 775 (NGSVGGSSSNNSANSNNSNNNNNNNNNNSNNSNNNNNSSQPILEP).

In terms of assembly, component of the TSET complex, a heterohexamer composed of tstA, tstB, tstC, tstD, tstE and tstF, which may act in plasma membrane turnover. tstA, tstB, tstC and tstD are likely to be the core complex members with tstE and tstF acting as associated scaffold proteins.

This Dictyostelium discoideum (Social amoeba) protein is TSET complex member tstF.